The primary structure comprises 312 residues: Malate dehydrogenase (312 aa).

Residues 7-13 and Asp34 contribute to the NAD(+) site; that span reads GAAGGIG. Substrate contacts are provided by Arg81 and Arg87. Residues Asn94 and 117-119 each bind NAD(+); that span reads ITN. The substrate site is built by Asn119 and Arg153. The active-site Proton acceptor is the His177. Met227 lines the NAD(+) pocket.

The protein belongs to the LDH/MDH superfamily. MDH type 1 family. As to quaternary structure, homodimer.

It catalyses the reaction (S)-malate + NAD(+) = oxaloacetate + NADH + H(+). Catalyzes the reversible oxidation of malate to oxaloacetate. This Photobacterium profundum (strain SS9) protein is Malate dehydrogenase.